The chain runs to 329 residues: Bifunctional nuclease 2 (329 aa).

Residues 121–256 (CVHNNPQGGN…YLAYSDGMRV (136 aa)) form the BFN domain. Residues 287–322 (DTKEFDLVRNMMQAVDEERYDEAAEWRDKLGKFQAK) enclose the UVR domain.

Belongs to the bifunctional nuclease family.

It localises to the nucleus. In terms of biological role, bifunctional nuclease with both RNase and DNase activities. Involved in basal defense response. Participates in abscisic acid-derived callose deposition following infection by a necrotrophic pathogen. This chain is Bifunctional nuclease 2 (BBD2), found in Arabidopsis thaliana (Mouse-ear cress).